Consider the following 261-residue polypeptide: 2-phytyl-1,4-beta-naphthoquinone methyltransferase, chloroplastic (261 aa).

Residues 1 to 30 (MAALLGIVSPVTFTGKHPVNSRSRRRTVVK) constitute a chloroplast transit peptide.

The protein belongs to the class I-like SAM-binding methyltransferase superfamily. MenG/UbiE family.

The protein localises to the plastid. It localises to the chloroplast. The enzyme catalyses demethylphylloquinol + S-adenosyl-L-methionine = phylloquinol + S-adenosyl-L-homocysteine + H(+). Involved in the biosynthesis of phylloquinone (vitamin K1). Methyltransferase required for the conversion of 2-phytyl-1,4-beta-naphthoquinol to phylloquinol. This is 2-phytyl-1,4-beta-naphthoquinone methyltransferase, chloroplastic from Arabidopsis thaliana (Mouse-ear cress).